We begin with the raw amino-acid sequence, 385 residues long: GTPase Obg (385 aa).

The Obg domain maps to 1–159 (MKFVDEVEIR…RNLKLELLLL (159 aa)). One can recognise an OBG-type G domain in the interval 160–333 (ADVGLLGLPN…LIHDVMTLLE (174 aa)). GTP is bound by residues 166-173 (GLPNAGKS), 191-195 (FTTLI), 213-216 (DIPG), 283-286 (NKID), and 314-316 (SAI). Positions 173 and 193 each coordinate Mg(2+).

This sequence belongs to the TRAFAC class OBG-HflX-like GTPase superfamily. OBG GTPase family. As to quaternary structure, monomer. The cofactor is Mg(2+).

The protein resides in the cytoplasm. In terms of biological role, an essential GTPase which binds GTP, GDP and possibly (p)ppGpp with moderate affinity, with high nucleotide exchange rates and a fairly low GTP hydrolysis rate. Plays a role in control of the cell cycle, stress response, ribosome biogenesis and in those bacteria that undergo differentiation, in morphogenesis control. In Pseudoalteromonas translucida (strain TAC 125), this protein is GTPase Obg.